Consider the following 501-residue polypeptide: Glucose N-acetyltransferase 1 (501 aa).

At 1-11 (MRLVSRRRLKG) the chain is on the cytoplasmic side. A helical; Signal-anchor for type II membrane protein transmembrane segment spans residues 12-32 (LALVAFALIGITIFVRILMEF). The Lumenal portion of the chain corresponds to 33–501 (QLEREVSFYK…SPKASEIQAA (469 aa)). An N-linked (GlcNAc...) asparagine glycan is attached at asparagine 176. The DXD motif lies at 197-199 (DND).

This sequence belongs to the GNT1 family.

The protein localises to the golgi apparatus membrane. Its subcellular location is the vacuole membrane. Its function is as follows. N-acetylglucosaminyltransferase involved in the Golgi-specific modification of N-linked glycans. The sequence is that of Glucose N-acetyltransferase 1 (GNT1) from Candida glabrata (strain ATCC 2001 / BCRC 20586 / JCM 3761 / NBRC 0622 / NRRL Y-65 / CBS 138) (Yeast).